The sequence spans 46 residues: Protein YpdJ (46 aa).

Its function is as follows. May be involved in H(2) production during fermentative growth. The polypeptide is Protein YpdJ (ypdJ) (Escherichia coli (strain K12)).